The primary structure comprises 127 residues: Small ribosomal subunit protein uS13 (127 aa).

A compositionally biased stretch (basic residues) spans 96 to 118 (LPVRGQRTHTNARTRKGPKRGIV). Residues 96 to 127 (LPVRGQRTHTNARTRKGPKRGIVRAKPAAPAR) are disordered.

The protein belongs to the universal ribosomal protein uS13 family. Part of the 30S ribosomal subunit. Forms a loose heterodimer with protein S19. Forms two bridges to the 50S subunit in the 70S ribosome.

Functionally, located at the top of the head of the 30S subunit, it contacts several helices of the 16S rRNA. In the 70S ribosome it contacts the 23S rRNA (bridge B1a) and protein L5 of the 50S subunit (bridge B1b), connecting the 2 subunits; these bridges are implicated in subunit movement. Contacts the tRNAs in the A and P-sites. In Myxococcus xanthus (strain DK1622), this protein is Small ribosomal subunit protein uS13.